The following is an 811-amino-acid chain: Phosphoinositide 3-kinase adapter protein 1 (811 aa).

The 139-residue stretch at 8 to 146 (RGCDILIFYS…AVRKAISEDS (139 aa)) folds into the TIR domain. The interval 10–145 (CDILIFYSPD…AAVRKAISED (136 aa)) is necessary and sufficient to mediate inhibition of NF-kappa-B downstream of activated TLRs; may mediate interaction with MYD88 and TIRAP. The disordered stretch occupies residues 146–169 (SGCDSVTDTEPEDERELPFSKQTN). Residues 182–318 (VQPDRIRCGA…NIPASGLHLF (137 aa)) form the DBB domain. Position 264 is a phosphotyrosine (Tyr264). 3 positions are modified to phosphotyrosine; by SYK: Tyr420, Tyr445, and Tyr460. At Tyr513 the chain carries Phosphotyrosine; by ABL1. Positions 525 to 551 (DLANRPPVPVPRPEASAPGPPPPPDNE) are disordered. The segment covering 530 to 550 (PPVPVPRPEASAPGPPPPPDN) has biased composition (pro residues). Phosphotyrosine; by ABL1 occurs at positions 553, 570, and 594. At Ser642 the chain carries Phosphoserine. Tyr694 is subject to Phosphotyrosine; by ABL1. The tract at residues 702 to 811 (VLPARTELRR…PPPPVPPRGR (110 aa)) is disordered. A compositionally biased stretch (basic and acidic residues) spans 707–716 (TELRRGDWKT). Low complexity predominate over residues 717 to 740 (DSMSSTASSTSNRSSTRSLLSVSS). Ser718 is modified (phosphoserine). Over residues 801–811 (HPPPPVPPRGR) the composition is skewed to pro residues.

In terms of assembly, homooligomer. Interacts (phosphorylated on tyrosine residues within YXXM motifs) with PIK3R1 (via SH2 domain); required for BCR- and TLR-mediated activation of phosphoinositide 3-kinase. Interacts (via polyproline C-terminal region) with ABI1 (via SH3 domain); the interaction promotes phosphorylation of PIK3AP1 by ABL1. May interact with MYD88 and TIRAP. Post-translationally, constitutively phosphorylated. Phosphorylated on tyrosine residues in C-terminal region by ABL1. Phosphorylated on tyrosine residues within the YXXM motifs by BTK and SYK. Isoform 1 and isoform 2 are phosphorylated on tyrosine residues, most likely within the YXXM motifs, via CD19 activation. Toll-like receptor activation induces appearance of a phosphorylated form associated with membranes. As to expression, predominantly expressed in spleen (at protein level). Expressed at lower levels in thymus, liver and lung. Expressed in B-cells, macrophages and natural killer (NK) cells.

It is found in the cytoplasm. Its subcellular location is the cell membrane. Functionally, signaling adapter that contributes to B-cell development by linking B-cell receptor (BCR) signaling to the phosphoinositide 3-kinase (PI3K)-Akt signaling pathway. Has a complementary role to the BCR coreceptor CD19, coupling BCR and PI3K activation by providing a docking site for the PI3K subunit PIK3R1. Alternatively, links Toll-like receptor (TLR) signaling to PI3K activation, a process preventing excessive inflammatory cytokine production. Also involved in the activation of PI3K in natural killer cells. May be involved in the survival of mature B-cells via activation of REL. The chain is Phosphoinositide 3-kinase adapter protein 1 (Pik3ap1) from Mus musculus (Mouse).